The primary structure comprises 428 residues: MFIDEVIITVKAGNGGDGSAAFRREKFVQFGGPDGGDGGKGGDVIFVADSNINTLIDFKFKKLFKAQNGENGQKKQMYGKKGEDLIIKVPVGTQVRDFTTGKLILDMSVNGEQRVLLKGGKGGYGNVHFKNSIRKAPKIAEKGGEGAEIKVKLELKLLADVALVGYPSVGKSSFINKVSAANSKVGSYHFTTLEPKLGVVRLEEGKSFVIADIPGLIEGAHEGVGLGDKFLKHIERCKMIYHIVDVAEIEGRDCIEDFEKINHELKKFSEKLAGKKQIVIANKMDLIWDMEKFEKFKSYLAEKGIEIYPVSVLLNEGLKEILYKTYDMLSRIEREPLEEETDITKLLKELKIEKEDFEIIRDEEDAIVVGGRIVDDVLAKYVIGMDDESLVTFLHMMRSLGMEEALQEFGVQDGDTVKIADVEFEYFE.

The region spanning Met-1–Leu-158 is the Obg domain. An OBG-type G domain is found at Ala-159–Ser-330. Residues Gly-165–Ser-172, Phe-190–Glu-194, Asp-212–Gly-215, Asn-282–Asp-285, and Ser-311–Leu-313 each bind GTP. Mg(2+) is bound by residues Ser-172 and Thr-192. Residues Glu-349 to Glu-428 enclose the OCT domain.

It belongs to the TRAFAC class OBG-HflX-like GTPase superfamily. OBG GTPase family. Monomer. Requires Mg(2+) as cofactor.

The protein localises to the cytoplasm. In terms of biological role, an essential GTPase which binds GTP, GDP and possibly (p)ppGpp with moderate affinity, with high nucleotide exchange rates and a fairly low GTP hydrolysis rate. Plays a role in control of the cell cycle, stress response, ribosome biogenesis and in those bacteria that undergo differentiation, in morphogenesis control. The chain is GTPase Obg from Fusobacterium nucleatum subsp. nucleatum (strain ATCC 25586 / DSM 15643 / BCRC 10681 / CIP 101130 / JCM 8532 / KCTC 2640 / LMG 13131 / VPI 4355).